Here is a 350-residue protein sequence, read N- to C-terminus: Protein pelota homolog (350 aa).

Belongs to the eukaryotic release factor 1 family. Pelota subfamily. In terms of assembly, monomer. A divalent metal cation is required as a cofactor.

The protein resides in the cytoplasm. Functionally, may function in recognizing stalled ribosomes, interact with stem-loop structures in stalled mRNA molecules, and effect endonucleolytic cleavage of the mRNA. May play a role in the release non-functional ribosomes and degradation of damaged mRNAs. Has endoribonuclease activity. The sequence is that of Protein pelota homolog from Methanosarcina barkeri (strain Fusaro / DSM 804).